We begin with the raw amino-acid sequence, 907 residues long: Lipoxygenase 1, chloroplastic (907 aa).

The transit peptide at M1–V49 directs the protein to the chloroplast. The region spanning D85–T209 is the PLAT domain. Residues P212–I907 form the Lipoxygenase domain. Fe cation is bound by residues H567, H572, H758, N762, and I907.

The protein belongs to the lipoxygenase family. Fe cation serves as cofactor. Confined to glandular trichomes in flowers, and, at low levels, in leaves.

The protein resides in the plastid. The protein localises to the chloroplast. It catalyses the reaction (9Z,12Z,15Z)-octadecatrienoate + O2 = 13-hydroperoxy-(9Z,11E,15Z)-octadecatrienoate. The protein operates within lipid metabolism; oxylipin biosynthesis. It functions in the pathway isoprenoid biosynthesis. Component of the monoterpenoid pyrethrins biosynthesis; pyrethrins are widely used plant-derived pesticide. Plant lipoxygenases may be involved in a number of diverse aspects of plant physiology including growth and development, pest resistance, and senescence or responses to wounding. Catalyzes the hydroperoxidation of lipids containing a cis,cis-1,4-pentadiene structure. Mediates the peroxidation of linolenic acid leading to the production of 13-hydroperoxylinolenic acid. The polypeptide is Lipoxygenase 1, chloroplastic (Tanacetum cinerariifolium (Dalmatian daisy)).